Reading from the N-terminus, the 227-residue chain is Mitochondrial inner membrane protease ATP23 (227 aa).

A divalent metal cation is bound at residue His-129. Residue Glu-130 is part of the active site. A divalent metal cation is bound at residue His-133.

This sequence belongs to the peptidase M76 family.

The protein localises to the mitochondrion inner membrane. Functionally, has a dual role in the assembly of mitochondrial ATPase. Acts as a protease that removes N-terminal residues of mitochondrial ATPase CF(0) subunit 6 at the intermembrane space side. Also involved in the correct assembly of the membrane-embedded ATPase CF(0) particle, probably mediating association of subunit 6 with the subunit 9 ring. This Cryptococcus neoformans var. neoformans serotype D (strain JEC21 / ATCC MYA-565) (Filobasidiella neoformans) protein is Mitochondrial inner membrane protease ATP23 (ATP23).